A 30-amino-acid chain; its full sequence is Mycofactocin precursor peptide (30 aa).

The protein belongs to the mycofactocin precursor peptide family. Interacts with MftB. In terms of processing, the post-translational modifications that lead to mycofactocin involve oxidative decarboxylation of the C-terminal tyrosine residue catalyzed by MftC, introduction of a tyramine-valine cross-link, removal of the modified C-terminal dipeptide by MftE. The released dipeptide then undergoes oxidative deamination by MftD, glycosylation by MftF and methylation by an unknown enzyme.

Functionally, precursor peptide that leads to mycofactocin (MFT) after extensive post-translational modifications by enzymes encoded by adjacent genes. Mycofactocin acts as a redox cofactor of nicotinamide-dependent oxidoreductases encoded in the same locus. The chain is Mycofactocin precursor peptide from Mycobacterium ulcerans (strain Agy99).